Consider the following 319-residue polypeptide: Nucleotide-binding protein Rru_A3448 (319 aa).

Positions 1-34 (MGRSASLLRLRDPAPLPTDIAPDPAEAPPSPAAD) are disordered. ATP is bound at residue 42–49 (GMSGAGRT). 90–93 (DTRT) is a binding site for GTP.

This sequence belongs to the RapZ-like family.

Displays ATPase and GTPase activities. This Rhodospirillum rubrum (strain ATCC 11170 / ATH 1.1.1 / DSM 467 / LMG 4362 / NCIMB 8255 / S1) protein is Nucleotide-binding protein Rru_A3448.